The sequence spans 149 residues: Conglutin delta 3 (149 aa).

The first 22 residues, 1–22 (MAKLTILIALVAALVLVVHTSA), serve as a signal peptide directing secretion. 4 disulfide bridges follow: Cys30/Cys98, Cys42/Cys86, Cys87/Cys134, and Cys100/Cys142.

Belongs to the 2S seed storage albumins family. As to quaternary structure, heterodimer of a small chain and a large chain; disulfide-linked.

It localises to the endoplasmic reticulum. The polypeptide is Conglutin delta 3 (Lupinus angustifolius (Narrow-leaved blue lupine)).